Reading from the N-terminus, the 161-residue chain is Ribosome maturation factor RimP (161 aa).

The protein belongs to the RimP family.

The protein resides in the cytoplasm. Required for maturation of 30S ribosomal subunits. The polypeptide is Ribosome maturation factor RimP (Desulfosudis oleivorans (strain DSM 6200 / JCM 39069 / Hxd3) (Desulfococcus oleovorans)).